We begin with the raw amino-acid sequence, 82 residues long: Small ribosomal subunit protein bS16 (82 aa).

Belongs to the bacterial ribosomal protein bS16 family.

The protein is Small ribosomal subunit protein bS16 of Pseudoalteromonas translucida (strain TAC 125).